The sequence spans 714 residues: Probable serine/threonine-protein kinase mkcB (714 aa).

The span at 1–12 (MKSILKKAKHFF) shows a compositional bias: basic residues. Disordered regions lie at residues 1 to 267 (MKSI…SSTS) and 281 to 349 (GSGS…EQKP). Residues 23–35 (GGEKTAKESESQQ) show a composition bias toward basic and acidic residues. Residues 62–83 (SQSQPTTSALQTSTSLQPSSSL) are compositionally biased toward low complexity. The segment covering 84 to 94 (HQIPQSQSSLE) has biased composition (polar residues). Composition is skewed to low complexity over residues 95 to 111 (LTTN…TKQL) and 120 to 166 (PHSQ…TLTT). A compositionally biased stretch (polar residues) spans 167–177 (PVPSSENLATL). Low complexity-rich tracts occupy residues 178–241 (STST…QEQT) and 254–267 (LSQS…SSTS). Over residues 282–294 (SGSTKNKDSSSAP) the composition is skewed to polar residues. Low complexity-rich tracts occupy residues 300-314 (NNNN…KNRS) and 324-337 (NNNN…KNNN). The Protein kinase domain maps to 438-687 (YKDSDQVGKG…AEELLKHPFI (250 aa)). ATP is bound by residues 444-452 (VGKGGFGTV) and Lys-467. Asp-558 (proton acceptor) is an active-site residue.

The protein belongs to the protein kinase superfamily. STE Ser/Thr protein kinase family. STE20 subfamily. It depends on Mg(2+) as a cofactor. Expressed at equal levels in prestalk and prespore cells.

It catalyses the reaction L-seryl-[protein] + ATP = O-phospho-L-seryl-[protein] + ADP + H(+). The catalysed reaction is L-threonyl-[protein] + ATP = O-phospho-L-threonyl-[protein] + ADP + H(+). The sequence is that of Probable serine/threonine-protein kinase mkcB from Dictyostelium discoideum (Social amoeba).